The following is a 688-amino-acid chain: MIOREX complex component 1 (688 aa).

The tract at residues 1 to 24 is disordered; sequence MGLKITKGQLRTKDLNQSSSKSSQ. The N-terminal 46 residues, 1-46, are a transit peptide targeting the mitochondrion; it reads MGLKITKGQLRTKDLNQSSSKSSQSSRIGVDTCIFTRMLPRINTAI.

As to quaternary structure, associates with the mitochondrial ribosome.

It localises to the mitochondrion. In terms of biological role, component of MIOREX complexes, large expressome-like assemblies of ribosomes with factors involved in all the steps of post-transcriptional gene expression. This Saccharomyces cerevisiae (strain ATCC 204508 / S288c) (Baker's yeast) protein is MIOREX complex component 1.